The sequence spans 210 residues: Thymidylate kinase (210 aa).

Residue 10 to 17 (GPEGAGKS) coordinates ATP.

This sequence belongs to the thymidylate kinase family.

It carries out the reaction dTMP + ATP = dTDP + ADP. Phosphorylation of dTMP to form dTDP in both de novo and salvage pathways of dTTP synthesis. The polypeptide is Thymidylate kinase (Pseudomonas fluorescens (strain SBW25)).